The chain runs to 670 residues: Aurofusarin cluster transcription factor aurR2 (670 aa).

Residues 12 to 38 (CVPCQHRKIRCNGQTPCAYCIRTGKEC) constitute a DNA-binding region (zn(2)-C6 fungal-type). 2 disordered regions span residues 57–76 (RLTA…IVSG) and 92–115 (GDEM…RTDT). Over residues 92-113 (GDEMQGKDVSPDPERPPLRTRT) the composition is skewed to basic and acidic residues.

Its subcellular location is the nucleus. In terms of biological role, transcription factor that may participate in the regulation of the expression of the gene cluster that mediates the biosynthesis of aurofusarin, a red mycelium pigment which is acting as a mycotoxin. The protein is Aurofusarin cluster transcription factor aurR2 of Gibberella zeae (strain ATCC MYA-4620 / CBS 123657 / FGSC 9075 / NRRL 31084 / PH-1) (Wheat head blight fungus).